The primary structure comprises 568 residues: Urease subunit alpha (568 aa).

One can recognise a Urease domain in the interval 131–568; that stretch reads GGMDAHIHFI…LPLAQRYFLY (438 aa). Residues H136, H138, and K219 each contribute to the Ni(2+) site. The residue at position 219 (K219) is an N6-carboxylysine. H221 provides a ligand contact to substrate. Ni(2+)-binding residues include H248 and H274. H322 functions as the Proton donor in the catalytic mechanism. D362 contributes to the Ni(2+) binding site.

It belongs to the metallo-dependent hydrolases superfamily. Urease alpha subunit family. As to quaternary structure, heterotrimer of UreA (gamma), UreB (beta) and UreC (alpha) subunits. Three heterotrimers associate to form the active enzyme. Ni cation serves as cofactor. Post-translationally, carboxylation allows a single lysine to coordinate two nickel ions.

The protein resides in the cytoplasm. It catalyses the reaction urea + 2 H2O + H(+) = hydrogencarbonate + 2 NH4(+). It functions in the pathway nitrogen metabolism; urea degradation; CO(2) and NH(3) from urea (urease route): step 1/1. In Cereibacter sphaeroides (strain ATCC 17023 / DSM 158 / JCM 6121 / CCUG 31486 / LMG 2827 / NBRC 12203 / NCIMB 8253 / ATH 2.4.1.) (Rhodobacter sphaeroides), this protein is Urease subunit alpha.